The chain runs to 40 residues: DNVPWGLARISHRTTGATSYVYDDSAGEGTCSYIIDTGIY.

Residues 4 to 40 (PWGLARISHRTTGATSYVYDDSAGEGTCSYIIDTGIY) form the Peptidase S8 domain. The Charge relay system role is filled by aspartate 36.

This sequence belongs to the peptidase S8 family. In terms of assembly, homodimer.

With respect to regulation, strongly inhibited by antipain and PMSF. Inhibited by benzamidine and aprotinin by 80% and 17% respectively. Little or no inhibition by EDTA, E-64, iodoacetic acid, leupeptin and FUT-175. Its function is as follows. Subtilisin-like serine protease. Cleaves prothrombin at 155-Arg-|-Ser-156, 45-Thr-|-Ala-46 and 316-Tyr-|-Ile-317 to produce meizothrombin(desF1)-like molecules. Degrades fibrinogen. Inhibits plasma coagulation. The polypeptide is Subtilisin-like serine protease AS-E1 (Acremonium sp).